The sequence spans 630 residues: SHC-transforming protein 4 (630 aa).

Residues 1–185 are CH2; sequence MRERGQDSLA…RQDRHFLQHL (185 aa). Disordered stretches follow at residues 39-80 and 118-150; these read TSLD…QESP and KLQE…QQDL. Low complexity predominate over residues 125-142; the sequence is PGSSGPSSPETSLSRSGT. The PID domain maps to 186–369; that stretch reads LGMGMNYCVR…VHIDSHAEER (184 aa). Residues 370-525 are CH1; that stretch reads EDHEYYNEIP…HIKQQLWSEE (156 aa). Tyr-424 carries the post-translational modification Phosphotyrosine. Polar residues-rich tracts occupy residues 471–486 and 502–513; these read LQST…SAQP and PGATAQPASSHS. The disordered stretch occupies residues 471 to 514; that stretch reads LQSTPGSAGNQRSAQPLGSPWHCGKAPETVQPGATAQPASSHSL. The region spanning 526–617 is the SH2 domain; that stretch reads CYHGKLSRKA…GSEVSLKQPV (92 aa).

In terms of assembly, interacts (via PID domain) with phosphorylated MUSK (via NPXY motif); undergoes tyrosine phosphorylation downstream of activated MUSK. Interacts with GRB2; the interaction is dependent of Tyr-424 phosphorylation and increased by EGF. Post-translationally, phosphorylated; the phosphorylation is enhanced by EGF. Phosphorylation at Tyr-424 is required for the interaction with GRB2. Only expressed in melanomas. Weakly expressed in normal melanocytes and benign nevi. Highly expressed at the transition from radial growth phase to vertical growth phase and metastatic melanomas, when tumor cells acquire migratory competence and invasive potential.

It localises to the postsynaptic cell membrane. Its function is as follows. Activates both Ras-dependent and Ras-independent migratory pathways in melanomas. Contributes to the early phases of agrin-induced tyrosine phosphorylation of CHRNB1. This is SHC-transforming protein 4 (SHC4) from Homo sapiens (Human).